We begin with the raw amino-acid sequence, 249 residues long: Putative [LysW]-aminoadipate/[LysW]-glutamate kinase (249 aa).

Substrate-binding residues include Arg-64 and Asn-166.

This sequence belongs to the acetylglutamate kinase family. LysZ subfamily.

The protein resides in the cytoplasm. It catalyses the reaction [amino-group carrier protein]-C-terminal-N-(1,4-dicarboxybutan-1-yl)-L-glutamine + ATP = [amino-group carrier protein]-C-terminal-N-(1-carboxy-5-phosphooxy-5-oxopentan-1-yl)-L-glutamine + ADP. The catalysed reaction is [amino-group carrier protein]-C-terminal-gamma-(L-glutamyl)-L-glutamate + ATP = [amino-group carrier protein]-C-terminal-gamma-(5-phospho-L-glutamyl)-L-glutamate + ADP. Its pathway is amino-acid biosynthesis; L-lysine biosynthesis via AAA pathway; L-lysine from L-alpha-aminoadipate (Thermus route): step 2/5. It participates in amino-acid biosynthesis; L-arginine biosynthesis. Its function is as follows. Involved in both the arginine and lysine biosynthetic pathways. Phosphorylates the LysW-bound precursors glutamate (for arginine biosynthesis), respectively alpha-aminoadipate (for lysine biosynthesis). The sequence is that of Putative [LysW]-aminoadipate/[LysW]-glutamate kinase from Pyrococcus horikoshii (strain ATCC 700860 / DSM 12428 / JCM 9974 / NBRC 100139 / OT-3).